The chain runs to 408 residues: Aminoacylase-1 (408 aa).

His-76 provides a ligand contact to Zn(2+). Residue Asp-78 is part of the active site. Asp-109 serves as a coordination point for Zn(2+). Catalysis depends on Glu-143, which acts as the Proton acceptor. The Zn(2+) site is built by Glu-144, Glu-172, and His-379.

The protein belongs to the peptidase M20A family. In terms of assembly, homodimer. The cofactor is Zn(2+).

It is found in the cytoplasm. It catalyses the reaction an N-acyl-L-amino acid + H2O = an L-alpha-amino acid + a carboxylate. The catalysed reaction is an N-acetyl-L-cysteine-S-conjugate + H2O = an S-substituted L-cysteine + acetate. Functionally, involved in the hydrolysis of N-acylated or N-acetylated amino acids (except L-aspartate). The chain is Aminoacylase-1 (acy1) from Dictyostelium discoideum (Social amoeba).